A 478-amino-acid chain; its full sequence is Argininosuccinate synthase (478 aa).

ATP-binding positions include A17–S25 and A43. Y99 is an L-citrulline binding site. Positions 129 and 131 each coordinate ATP. L-aspartate is bound by residues T131, N135, and D136. N135 lines the L-citrulline pocket. D136 contributes to the ATP binding site. L-citrulline-binding residues include R139 and S192. Position 194 (D194) interacts with ATP. L-citrulline contacts are provided by T201, E203, and E280.

This sequence belongs to the argininosuccinate synthase family. Type 2 subfamily. Homotetramer.

Its subcellular location is the cytoplasm. It carries out the reaction L-citrulline + L-aspartate + ATP = 2-(N(omega)-L-arginino)succinate + AMP + diphosphate + H(+). It participates in amino-acid biosynthesis; L-arginine biosynthesis; L-arginine from L-ornithine and carbamoyl phosphate: step 2/3. This Leifsonia xyli subsp. xyli (strain CTCB07) protein is Argininosuccinate synthase.